Reading from the N-terminus, the 86-residue chain is DNA-directed RNA polymerase subunit omega (86 aa).

It belongs to the RNA polymerase subunit omega family. In terms of assembly, the RNAP catalytic core consists of 2 alpha, 1 beta, 1 beta' and 1 omega subunit. When a sigma factor is associated with the core the holoenzyme is formed, which can initiate transcription.

It catalyses the reaction RNA(n) + a ribonucleoside 5'-triphosphate = RNA(n+1) + diphosphate. Promotes RNA polymerase assembly. Latches the N- and C-terminal regions of the beta' subunit thereby facilitating its interaction with the beta and alpha subunits. The sequence is that of DNA-directed RNA polymerase subunit omega from Psychrobacter sp. (strain PRwf-1).